A 483-amino-acid chain; its full sequence is Transmembrane protein 39B (483 aa).

An N-linked (GlcNAc...) asparagine glycan is attached at N9. 7 helical membrane-spanning segments follow: residues 76–96, 114–134, 158–182, 187–207, 281–301, 414–434, and 440–460; these read HLLF…VHYI, TSLN…IVLA, LLVA…ILLF, FFNL…LQLG, EVLL…VWFV, VLNI…YSLL, and HHTI…FKLL.

This sequence belongs to the TMEM39 family.

Its subcellular location is the endoplasmic reticulum membrane. Its function is as follows. May protect the cells against DNA damage caused by exposure to the cold-warming stress and facilitates tissue damage repair during the recovery phase. The chain is Transmembrane protein 39B from Xenopus tropicalis (Western clawed frog).